We begin with the raw amino-acid sequence, 128 residues long: MKTLALDIGLKRIGVALCVNKSIAMPLEAIIRKNRNQAANEVKKYIKEYDVNTLVVGVPLGGSSEDEMRKRVEHFISLLDFDKEVFFVDESFSSKNAQELGMVNLKKKDGKLDSLAAYLFLKDFYGLT.

The protein belongs to the YqgF nuclease family.

Its subcellular location is the cytoplasm. In terms of biological role, could be a nuclease involved in processing of the 5'-end of pre-16S rRNA. The chain is Putative pre-16S rRNA nuclease from Campylobacter lari (strain RM2100 / D67 / ATCC BAA-1060).